Reading from the N-terminus, the 93-residue chain is uncharacterized protein (93 aa).

Positions 1–11 (MALMVLMALVG) are cleaved as a signal peptide. Cysteine 12 carries N-palmitoyl cysteine lipidation. The S-diacylglycerol cysteine moiety is linked to residue cysteine 12.

Its subcellular location is the cell membrane. This is an uncharacterized protein from Escherichia coli O6:K15:H31 (strain 536 / UPEC).